Reading from the N-terminus, the 279-residue chain is Putative expansin-A26 (279 aa).

A signal peptide spans 1–27 (MKLLEKMIYVEFLMIIMAMWVVPMSYG). One can recognise an Expansin-like EG45 domain in the interval 76–186 (QGACGYGNLF…RRIPCSKTGG (111 aa)). Residues 196–275 (YFLMVLIYNV…NWGFGQTFDG (80 aa)) enclose the Expansin-like CBD domain.

Belongs to the expansin family. Expansin A subfamily.

The protein resides in the secreted. The protein localises to the cell wall. Its subcellular location is the membrane. Functionally, causes loosening and extension of plant cell walls by disrupting non-covalent bonding between cellulose microfibrils and matrix glucans. No enzymatic activity has been found. This chain is Putative expansin-A26 (EXPA26), found in Arabidopsis thaliana (Mouse-ear cress).